The following is a 431-amino-acid chain: Enolase (431 aa).

Gln-166 is a (2R)-2-phosphoglycerate binding site. Catalysis depends on Glu-208, which acts as the Proton donor. Residues Asp-245, Glu-288, and Asp-315 each coordinate Mg(2+). Residues Lys-340, Arg-369, Ser-370, and Lys-391 each coordinate (2R)-2-phosphoglycerate. The Proton acceptor role is filled by Lys-340.

It belongs to the enolase family. It depends on Mg(2+) as a cofactor.

Its subcellular location is the cytoplasm. It localises to the secreted. It is found in the cell surface. It catalyses the reaction (2R)-2-phosphoglycerate = phosphoenolpyruvate + H2O. It participates in carbohydrate degradation; glycolysis; pyruvate from D-glyceraldehyde 3-phosphate: step 4/5. Its function is as follows. Catalyzes the reversible conversion of 2-phosphoglycerate (2-PG) into phosphoenolpyruvate (PEP). It is essential for the degradation of carbohydrates via glycolysis. This Clostridium perfringens (strain ATCC 13124 / DSM 756 / JCM 1290 / NCIMB 6125 / NCTC 8237 / Type A) protein is Enolase.